The primary structure comprises 356 residues: Protein-glutamate methylesterase/protein-glutamine glutaminase (356 aa).

Residues 4–121 (KVLIVDDSAL…QSGMLEYTDL (118 aa)) enclose the Response regulatory domain. Residue Asp55 is modified to 4-aspartylphosphate. In terms of domain architecture, CheB-type methylesterase spans 156-349 (PLTSSEKLII…RRVLEFFAAH (194 aa)). Catalysis depends on residues Ser169, His195, and Asp291.

This sequence belongs to the CheB family. Phosphorylated by CheA. Phosphorylation of the N-terminal regulatory domain activates the methylesterase activity.

The protein resides in the cytoplasm. It carries out the reaction [protein]-L-glutamate 5-O-methyl ester + H2O = L-glutamyl-[protein] + methanol + H(+). The catalysed reaction is L-glutaminyl-[protein] + H2O = L-glutamyl-[protein] + NH4(+). Functionally, involved in chemotaxis. Part of a chemotaxis signal transduction system that modulates chemotaxis in response to various stimuli. Catalyzes the demethylation of specific methylglutamate residues introduced into the chemoreceptors (methyl-accepting chemotaxis proteins or MCP) by CheR. Also mediates the irreversible deamidation of specific glutamine residues to glutamic acid. The polypeptide is Protein-glutamate methylesterase/protein-glutamine glutaminase (Thiobacillus denitrificans (strain ATCC 25259 / T1)).